The chain runs to 94 residues: Large ribosomal subunit protein eL43B (94 aa).

The segment at 39 to 62 (CPFCGRLTVKRTAAGIWKCSGKGC) adopts a C4-type zinc-finger fold.

Belongs to the eukaryotic ribosomal protein eL43 family. Component of the large ribosomal subunit (LSU). Mature yeast ribosomes consist of a small (40S) and a large (60S) subunit. The 40S small subunit contains 1 molecule of ribosomal RNA (18S rRNA) and at least 33 different proteins. The large 60S subunit contains 3 rRNA molecules (25S, 5.8S and 5S rRNA) and at least 46 different proteins.

It localises to the cytoplasm. Functionally, component of the ribosome, a large ribonucleoprotein complex responsible for the synthesis of proteins in the cell. The small ribosomal subunit (SSU) binds messenger RNAs (mRNAs) and translates the encoded message by selecting cognate aminoacyl-transfer RNA (tRNA) molecules. The large subunit (LSU) contains the ribosomal catalytic site termed the peptidyl transferase center (PTC), which catalyzes the formation of peptide bonds, thereby polymerizing the amino acids delivered by tRNAs into a polypeptide chain. The nascent polypeptides leave the ribosome through a tunnel in the LSU and interact with protein factors that function in enzymatic processing, targeting, and the membrane insertion of nascent chains at the exit of the ribosomal tunnel. In Schizosaccharomyces pombe (strain 972 / ATCC 24843) (Fission yeast), this protein is Large ribosomal subunit protein eL43B (rpl4302).